Consider the following 246-residue polypeptide: 2-C-methyl-D-erythritol 4-phosphate cytidylyltransferase (246 aa).

This sequence belongs to the IspD/TarI cytidylyltransferase family. IspD subfamily.

The enzyme catalyses 2-C-methyl-D-erythritol 4-phosphate + CTP + H(+) = 4-CDP-2-C-methyl-D-erythritol + diphosphate. Its pathway is isoprenoid biosynthesis; isopentenyl diphosphate biosynthesis via DXP pathway; isopentenyl diphosphate from 1-deoxy-D-xylulose 5-phosphate: step 2/6. In terms of biological role, catalyzes the formation of 4-diphosphocytidyl-2-C-methyl-D-erythritol from CTP and 2-C-methyl-D-erythritol 4-phosphate (MEP). This chain is 2-C-methyl-D-erythritol 4-phosphate cytidylyltransferase, found in Chlorobaculum parvum (strain DSM 263 / NCIMB 8327) (Chlorobium vibrioforme subsp. thiosulfatophilum).